Consider the following 262-residue polypeptide: Small ribosomal subunit protein eS4 (262 aa).

In terms of domain architecture, S4 RNA-binding spans 42–105 (LPLXVFLRNR…NEHFRLAYDV (64 aa)).

This sequence belongs to the eukaryotic ribosomal protein eS4 family.

This chain is Small ribosomal subunit protein eS4 (RPS4), found in Candida albicans (Yeast).